We begin with the raw amino-acid sequence, 629 residues long: Pentatricopeptide repeat-containing protein At1g62930, chloroplastic (629 aa).

A chloroplast-targeting transit peptide spans 1–41 (MTSCVHLGIVASQSKKMSLAKRFAQLRKASPLFSLRGVYFS). PPR repeat units follow at residues 79 to 113 (SIVEFNKLLSAIAKMNKFDLVISLGERMQNLRISY), 114 to 148 (DLYSYNILINCFCRRSQLPLALAVLGKMMKLGYEP), 149 to 183 (DIVTLSSLLNGYCHGKRISEAVALVDQMFVMEYQP), 184 to 218 (NTVTFNTLIHGLFLHNKASEAVALIDRMVARGCQP), 219 to 253 (DLFTYGTVVNGLCKRGDIDLALSLLKKMEKGKIEA), 254 to 288 (DVVIYTTIIDALCNYKNVNDALNLFTEMDNKGIRP), 289 to 323 (NVVTYNSLIRCLCNYGRWSDASRLLSDMIERKINP), 324 to 358 (NVVTFSALIDAFVKEGKLVEAEKLYDEMIKRSIDP), 359 to 393 (DIFTYSSLINGFCMHDRLDEAKHMFELMISKDCFP), 394 to 428 (NVVTYNTLIKGFCKAKRVEEGMELFREMSQRGLVG), 429 to 463 (NTVTYNTLIQGLFQAGDCDMAQKIFKKMVSDGVPP), 464 to 498 (DIITYSILLDGLCKYGKLEKALVVFEYLQKSKMEP), 499 to 533 (DIYTYNIMIEGMCKAGKVEDGWDLFCSLSLKGVKP), 534 to 568 (NVIIYTTMISGFCRKGLKEEADALFREMKEDGTLP), and 569 to 603 (NSGTYNTLIRARLRDGDKAASAELIKEMRSCGFVG).

Belongs to the PPR family. P subfamily.

It localises to the plastid. It is found in the chloroplast. This chain is Pentatricopeptide repeat-containing protein At1g62930, chloroplastic, found in Arabidopsis thaliana (Mouse-ear cress).